The chain runs to 517 residues: Maturase K (517 aa).

It belongs to the intron maturase 2 family. MatK subfamily.

Its subcellular location is the plastid. It is found in the chloroplast. Functionally, usually encoded in the trnK tRNA gene intron. Probably assists in splicing its own and other chloroplast group II introns. The polypeptide is Maturase K (Trillium maculatum (Spotted wakerobin)).